The primary structure comprises 110 residues: UPF0060 membrane protein Rpal_4363 (110 aa).

The next 4 membrane-spanning stretches (helical) occupy residues 4 to 24, 31 to 51, 59 to 79, and 88 to 108; these read LLTF…FWAW, PLWL…LTLA, AYAA…WAIE, and VIGA…PRAL.

Belongs to the UPF0060 family.

The protein localises to the cell inner membrane. The protein is UPF0060 membrane protein Rpal_4363 of Rhodopseudomonas palustris (strain TIE-1).